A 998-amino-acid polypeptide reads, in one-letter code: Mis18-binding protein 1 (998 aa).

Lysine 7 is covalently cross-linked (Glycyl lysine isopeptide (Lys-Gly) (interchain with G-Cter in SUMO2)). Residues serine 9, serine 109, and serine 134 each carry the phosphoserine modification. The interval 122–153 (QRDKQEQLTRSSSMLGSPQGEHTKDFPPNTDK) is disordered. The span at 142 to 153 (EHTKDFPPNTDK) shows a compositional bias: basic and acidic residues. A phosphoserine mark is found at serine 169 and serine 258. One can recognise an SANTA domain in the interval 336 to 422 (VHLQEWMIKV…MFGFPHNWKE (87 aa)). Disordered regions lie at residues 438–460 (KTRQ…AEDK) and 476–502 (DNSL…KERR). Residues 488-497 (PLNSLEQPTS) show a composition bias toward polar residues. Phosphothreonine occurs at positions 516 and 578. Serine 638 and serine 639 each carry phosphoserine. Residues 638-660 (SSEENEVEIKSRTRARNTKERLN) form a disordered region. Positions 644-660 (VEIKSRTRARNTKERLN) are enriched in basic and acidic residues. At threonine 688 the chain carries Phosphothreonine. A Glycyl lysine isopeptide (Lys-Gly) (interchain with G-Cter in SUMO2) cross-link involves residue lysine 707. At serine 726 the chain carries Phosphoserine. The 56-residue stretch at 741–796 (TDDEEWSEQELQKLHCAFTSLPKHKPGFWSDVAMAVGSRTADECQKKYTEEPQGQG) folds into the SANT domain. Lysine 765 is covalently cross-linked (Glycyl lysine isopeptide (Lys-Gly) (interchain with G-Cter in SUMO2)). Residues 784 to 821 (CQKKYTEEPQGQGSRKHGSKKKQANKVQNGEKDSADAK) form a disordered region. Positions 797-807 (SRKHGSKKKQA) are enriched in basic residues. Positions 812-821 (NGEKDSADAK) are enriched in basic and acidic residues. Glycyl lysine isopeptide (Lys-Gly) (interchain with G-Cter in SUMO2) cross-links involve residues lysine 821, lysine 828, and lysine 847. A Phosphoserine modification is found at serine 872. Lysine 948 participates in a covalent cross-link: Glycyl lysine isopeptide (Lys-Gly) (interchain with G-Cter in SUMO2). 2 positions are modified to phosphoserine: serine 955 and serine 985. Residues 976–998 (SKYFIDDTESDEEEKDYYFSNSD) are disordered. A compositionally biased stretch (acidic residues) spans 981-990 (DDTESDEEEK).

Interacts with SP1. Interacts with MIS18A. Identified in a complex containing MIS18A, OIP5/MIS18B, MIS18BP1, RBBP7 and RBBP4. Interacts with KAT7/HBO1. Interacts (via N-terminus) with FLNA (via N-terminus).

It is found in the nucleus. It localises to the chromosome. The protein resides in the centromere. Required for recruitment of CENPA to centromeres and normal chromosome segregation during mitosis. The protein is Mis18-binding protein 1 (Mis18bp1) of Mus musculus (Mouse).